The chain runs to 196 residues: Heat shock protein beta-8 (196 aa).

Positions 1–28 are disordered; sequence MADGQLPFPCSYPSRLRRDPFRDSPLSS. A phosphoserine mark is found at Ser24 and Ser57. The residue at position 63 (Thr63) is a Phosphothreonine. 2 positions are modified to asymmetric dimethylarginine: Arg71 and Arg78. The region spanning 74–185 is the sHSP domain; that stretch reads TATARFGVPA…PFGESSFNNE (112 aa). The segment at 176–196 is disordered; sequence PFGESSFNNELPQDNQEVTCS. Polar residues predominate over residues 178–196; sequence GESSFNNELPQDNQEVTCS.

The protein belongs to the small heat shock protein (HSP20) family. As to quaternary structure, monomer. Forms a ternary complex with BAG3 and HSPA1A. Component of the chaperone-assisted selective autophagy (CASA) complex consisting of BAG3, HSPA8/HSC70, HSPB8 and STUB1/CHIP. Interacts with HSPB1. Interacts with DNAJB6. Interacts with BAG3. Phosphorylated.

Its subcellular location is the cytoplasm. The protein localises to the nucleus. Its function is as follows. Involved in the chaperone-assisted selective autophagy (CASA), a crucial process for protein quality control, particularly in mechanical strained cells and tissues such as muscle. Displays temperature-dependent chaperone activity. This Rattus norvegicus (Rat) protein is Heat shock protein beta-8 (Hspb8).